The sequence spans 308 residues: Aspartate carbamoyltransferase catalytic subunit (308 aa).

Residues Arg-49 and Thr-50 each contribute to the carbamoyl phosphate site. Lys-77 lines the L-aspartate pocket. Carbamoyl phosphate-binding residues include Arg-99, His-127, and Gln-130. Positions 160 and 211 each coordinate L-aspartate. The carbamoyl phosphate site is built by Ala-252 and Pro-253.

This sequence belongs to the aspartate/ornithine carbamoyltransferase superfamily. ATCase family. In terms of assembly, heterododecamer (2C3:3R2) of six catalytic PyrB chains organized as two trimers (C3), and six regulatory PyrI chains organized as three dimers (R2).

The catalysed reaction is carbamoyl phosphate + L-aspartate = N-carbamoyl-L-aspartate + phosphate + H(+). Its pathway is pyrimidine metabolism; UMP biosynthesis via de novo pathway; (S)-dihydroorotate from bicarbonate: step 2/3. Functionally, catalyzes the condensation of carbamoyl phosphate and aspartate to form carbamoyl aspartate and inorganic phosphate, the committed step in the de novo pyrimidine nucleotide biosynthesis pathway. This is Aspartate carbamoyltransferase catalytic subunit from Bacillus caldolyticus.